Reading from the N-terminus, the 676-residue chain is Phosphatidylinositol-3,5-bisphosphate 3-phosphatase MTMR6 (676 aa).

The Myotubularin phosphatase domain occupies Gly-125–Tyr-501. Residues Asn-249, Asn-274, and Ile-275 each contribute to the a 1,2-diacyl-sn-glycero-3-phospho-(1D-myo-inositol-3,5-bisphosphate) site. A 1,2-diacyl-sn-glycero-3-phospho-(1D-myo-inositol-3-phosphate)-binding residues include Asn-249, Asn-274, and Ile-275. Substrate contacts are provided by residues Asn-249–Gln-252, Asn-274–Ile-275, and Cys-335–Arg-341. The active-site Phosphocysteine intermediate is Cys-335. A 1,2-diacyl-sn-glycero-3-phospho-(1D-myo-inositol-3,5-bisphosphate) is bound by residues Ser-336, Asp-337, Gly-338, Trp-339, Asp-340, Arg-341, Lys-377, and Arg-381. A 1,2-diacyl-sn-glycero-3-phospho-(1D-myo-inositol-3-phosphate)-binding residues include Ser-336, Asp-337, Gly-338, Trp-339, Asp-340, and Arg-341. Arg-381 is an a 1,2-diacyl-sn-glycero-3-phospho-(1D-myo-inositol-3-phosphate) binding site. Arg-381 lines the substrate pocket. The FYVE-type zinc finger occupies Lys-618–Thr-675.

Belongs to the protein-tyrosine phosphatase family. Non-receptor class myotubularin subfamily. In terms of assembly, heterodimer with mtm-9. Expressed in intestinal cells. Expressed in head neurons, pre-anal ganglion, hypodermal cells, anal depressor muscle and non-neuronal cells in the tail.

The protein resides in the cytoplasm. The protein localises to the membrane. It is found in the apical cell membrane. It carries out the reaction a 1,2-diacyl-sn-glycero-3-phospho-(1D-myo-inositol-3,5-bisphosphate) + H2O = a 1,2-diacyl-sn-glycero-3-phospho-(1D-myo-inositol-5-phosphate) + phosphate. The enzyme catalyses a 1,2-diacyl-sn-glycero-3-phospho-(1D-myo-inositol-3-phosphate) + H2O = a 1,2-diacyl-sn-glycero-3-phospho-(1D-myo-inositol) + phosphate. The catalysed reaction is 1,2-dioctanoyl-sn-glycero-3-phospho-(1D-myo-inositol-3,5-bisphosphate) + H2O = 1,2-dioctanoyl-sn-glycero-3-phospho-(1D-myo-inositol-5-phosphate) + phosphate. It catalyses the reaction 1,2-dioctanoyl-sn-glycero-3-phospho-(1-D-myo-inositol-3-phosphate) + H2O = 1,2-dioctanoyl-sn-glycero-3-phospho-(1D-myo-inositol) + phosphate. Functionally, probable lipid phosphatase that specifically dephosphorylates the D-3 position of phosphatidylinositol 3-phosphate and phosphatidylinositol 3,5-bisphosphate, generating phosphatidylinositol and phosphatidylinositol 5-phosphate. In association with mtm-9, plays a role in endosome trafficking probably by regulating phosphatidylinositol-3-phosphate levels. Regulates fluid phase endocytosis in coelomocytes. Controls the endosomal localization of sorting nexin snx-3 and the levels of sorting receptor mig-14. By regulating the retrograde transport of mig-14, may be involved in the secretion of Wnt ligands such as egl-20. Regulates posterior migration of QL neuroblast descendants and the anterior migration of QR neuroblast descendants and HSN neurons during larval development. Involved in the formation of correct synapse number in DA9 motor neurons probably in part by regulating the secretion of Wnt ligand egl-20. The sequence is that of Phosphatidylinositol-3,5-bisphosphate 3-phosphatase MTMR6 from Caenorhabditis elegans.